Reading from the N-terminus, the 429-residue chain is MNILIIGNGGREHALAWKVAQSPLADKVFVAPGNAGTALEHKVENVNISATDIPALVKFAQDKQIGLTIVGPEAPLVIGVVDAFREAGLKIFGPAKAAAQLEGSKAFTKDFLARHKIPTAEYQNFTEVEPALTYLREKGTPIVVKADGLAAGKGVIVAMTLQEAEDAVRDMLSGNAFGEAGSRVVIEEFLDGEEASFIVMVDGKNVEPMASSQDHKRVGENDTGLNTGGMGAYSPAPVITPEIHSRIMKEVIYPTVNGMAAEGNVYTGFLYAGLMIMPNGQPKVIEFNCRFGDPETQPIMLRLKSDLVELCLKACDGKLDEVISQWDLRASLGIVLAAEGYPKDYRKGDEISGLPKSAVKNEKVFLAGVAEQEGKLVTNGGRVLCVTALGESVFEAQQKALKLAEQIQWSGRFYRRDIGYRAVERELQK.

The ATP-grasp domain maps to 109–316; sequence KDFLARHKIP…LVELCLKACD (208 aa). An ATP-binding site is contributed by 135–196; sequence LREKGTPIVV…EEFLDGEEAS (62 aa). Mg(2+) contacts are provided by glutamate 286 and asparagine 288.

Belongs to the GARS family. The cofactor is Mg(2+). Mn(2+) is required as a cofactor.

The enzyme catalyses 5-phospho-beta-D-ribosylamine + glycine + ATP = N(1)-(5-phospho-beta-D-ribosyl)glycinamide + ADP + phosphate + H(+). It functions in the pathway purine metabolism; IMP biosynthesis via de novo pathway; N(1)-(5-phospho-D-ribosyl)glycinamide from 5-phospho-alpha-D-ribose 1-diphosphate: step 2/2. In Haemophilus influenzae (strain ATCC 51907 / DSM 11121 / KW20 / Rd), this protein is Phosphoribosylamine--glycine ligase.